The primary structure comprises 691 residues: Elongation factor G (691 aa).

A tr-type G domain is found at Asn12–Leu286. GTP-binding positions include Ala21–Thr28, Asp85–His89, and Asn139–Asp142.

This sequence belongs to the TRAFAC class translation factor GTPase superfamily. Classic translation factor GTPase family. EF-G/EF-2 subfamily.

It is found in the cytoplasm. In terms of biological role, catalyzes the GTP-dependent ribosomal translocation step during translation elongation. During this step, the ribosome changes from the pre-translocational (PRE) to the post-translocational (POST) state as the newly formed A-site-bound peptidyl-tRNA and P-site-bound deacylated tRNA move to the P and E sites, respectively. Catalyzes the coordinated movement of the two tRNA molecules, the mRNA and conformational changes in the ribosome. The sequence is that of Elongation factor G from Fervidobacterium nodosum (strain ATCC 35602 / DSM 5306 / Rt17-B1).